The following is a 264-amino-acid chain: Meiotic recombination protein REC102 (264 aa).

The protein belongs to the TOP6B-like family. Interacts with REC104; seems to form a functional unit with REC104. REC102-REC104 interacts with SKI8-SPO11 and this interaction is required for proper subcellular location of the proteins during the initiation of recombination. Interacts with MEI4, REC114 and SPO11.

Its subcellular location is the nucleus. Functionally, required for formation of the SPO11-mediated double-strand breaks (DSBs) that initiate meiotic recombination. May mediate the interaction between SPO11 subunits during meiosis. Also needed for homolog chromosome pairing, synaptonemal complex formation, and for the proper timing of the first meiotic division. Not required for mitosis and mitotic DNA repair mechanisms. This Saccharomyces cerevisiae (strain ATCC 204508 / S288c) (Baker's yeast) protein is Meiotic recombination protein REC102.